A 233-amino-acid polypeptide reads, in one-letter code: Biosynthetic peptidoglycan transglycosylase (233 aa).

The chain crosses the membrane as a helical span at residues 17-37 (IVLAVLALVVLPYVLIFFYLL).

This sequence belongs to the glycosyltransferase 51 family.

The protein resides in the cell inner membrane. It carries out the reaction [GlcNAc-(1-&gt;4)-Mur2Ac(oyl-L-Ala-gamma-D-Glu-L-Lys-D-Ala-D-Ala)](n)-di-trans,octa-cis-undecaprenyl diphosphate + beta-D-GlcNAc-(1-&gt;4)-Mur2Ac(oyl-L-Ala-gamma-D-Glu-L-Lys-D-Ala-D-Ala)-di-trans,octa-cis-undecaprenyl diphosphate = [GlcNAc-(1-&gt;4)-Mur2Ac(oyl-L-Ala-gamma-D-Glu-L-Lys-D-Ala-D-Ala)](n+1)-di-trans,octa-cis-undecaprenyl diphosphate + di-trans,octa-cis-undecaprenyl diphosphate + H(+). The protein operates within cell wall biogenesis; peptidoglycan biosynthesis. In terms of biological role, peptidoglycan polymerase that catalyzes glycan chain elongation from lipid-linked precursors. The sequence is that of Biosynthetic peptidoglycan transglycosylase from Rhizobium etli (strain ATCC 51251 / DSM 11541 / JCM 21823 / NBRC 15573 / CFN 42).